A 281-amino-acid polypeptide reads, in one-letter code: Pantothenate synthetase (281 aa).

An ATP-binding site is contributed by 30–37 (MGNLHQGH). Histidine 37 serves as the catalytic Proton donor. Glutamine 61 lines the (R)-pantoate pocket. Glutamine 61 contributes to the beta-alanine binding site. 149 to 152 (GNKD) lines the ATP pocket. (R)-pantoate is bound at residue glutamine 155. Residues isoleucine 178 and 186 to 189 (MSSR) contribute to the ATP site.

The protein belongs to the pantothenate synthetase family. Homodimer.

Its subcellular location is the cytoplasm. It catalyses the reaction (R)-pantoate + beta-alanine + ATP = (R)-pantothenate + AMP + diphosphate + H(+). Its pathway is cofactor biosynthesis; (R)-pantothenate biosynthesis; (R)-pantothenate from (R)-pantoate and beta-alanine: step 1/1. Catalyzes the condensation of pantoate with beta-alanine in an ATP-dependent reaction via a pantoyl-adenylate intermediate. This is Pantothenate synthetase from Shewanella oneidensis (strain ATCC 700550 / JCM 31522 / CIP 106686 / LMG 19005 / NCIMB 14063 / MR-1).